A 198-amino-acid chain; its full sequence is Nucleoid occlusion factor SlmA (198 aa).

An HTH tetR-type domain is found at 9–70 (RNRREEILQA…SLIEFIEDSL (62 aa)). Positions 33–52 (TTAKLAANVGVSEAALYRHF) form a DNA-binding region, H-T-H motif. Positions 119 to 144 (DRLQGRINQLYERIEVQLRQVLRERK) form a coiled coil.

This sequence belongs to the nucleoid occlusion factor SlmA family. In terms of assembly, homodimer. Interacts with FtsZ.

Its subcellular location is the cytoplasm. The protein resides in the nucleoid. Required for nucleoid occlusion (NO) phenomenon, which prevents Z-ring formation and cell division over the nucleoid. Acts as a DNA-associated cell division inhibitor that binds simultaneously chromosomal DNA and FtsZ, and disrupts the assembly of FtsZ polymers. SlmA-DNA-binding sequences (SBS) are dispersed on non-Ter regions of the chromosome, preventing FtsZ polymerization at these regions. This chain is Nucleoid occlusion factor SlmA, found in Sodalis glossinidius (strain morsitans).